The primary structure comprises 145 residues: Cell division protein SepF (145 aa).

This sequence belongs to the SepF family. In terms of assembly, homodimer. Interacts with FtsZ.

It localises to the cytoplasm. Its function is as follows. Cell division protein that is part of the divisome complex and is recruited early to the Z-ring. Probably stimulates Z-ring formation, perhaps through the cross-linking of FtsZ protofilaments. Its function overlaps with FtsA. The protein is Cell division protein SepF of Lactobacillus acidophilus (strain ATCC 700396 / NCK56 / N2 / NCFM).